Reading from the N-terminus, the 361-residue chain is Peptide chain release factor 1 (361 aa).

Position 238 is an N5-methylglutamine (glutamine 238).

The protein belongs to the prokaryotic/mitochondrial release factor family. In terms of processing, methylated by PrmC. Methylation increases the termination efficiency of RF1.

The protein resides in the cytoplasm. In terms of biological role, peptide chain release factor 1 directs the termination of translation in response to the peptide chain termination codons UAG and UAA. This is Peptide chain release factor 1 from Mesomycoplasma hyopneumoniae (strain 232) (Mycoplasma hyopneumoniae).